The sequence spans 86 residues: Small ribosomal subunit protein bS20 (86 aa).

Positions 1-25 (MANIKSQQKRNKTNERARLRNKSVK) are disordered.

Belongs to the bacterial ribosomal protein bS20 family.

Binds directly to 16S ribosomal RNA. The protein is Small ribosomal subunit protein bS20 of Mycobacterium avium (strain 104).